The primary structure comprises 190 residues: Outer-membrane lipoprotein LolB (190 aa).

The first 16 residues, 1–16 (MRLRFSLLLTVSLLAG), serve as a signal peptide directing secretion. A lipid anchor (N-palmitoyl cysteine) is attached at Cys17. Cys17 carries the S-diacylglycerol cysteine lipid modification.

The protein belongs to the LolB family. In terms of assembly, monomer.

The protein localises to the cell outer membrane. Its function is as follows. Plays a critical role in the incorporation of lipoproteins in the outer membrane after they are released by the LolA protein. The sequence is that of Outer-membrane lipoprotein LolB from Dechloromonas aromatica (strain RCB).